The primary structure comprises 556 residues: Carotenoid-cleaving dioxygenase, mitochondrial (556 aa).

4 residues coordinate Fe cation: His203, His263, His334, and His550.

The protein belongs to the carotenoid oxygenase family. Fe(2+) serves as cofactor.

It localises to the mitochondrion. The enzyme catalyses all-trans-beta-carotene + O2 = beta-ionone + all-trans-10'-apo-beta-carotenal. It catalyses the reaction 5-cis-lycopene + O2 = 5-cis-10'-apo-lycopenal + (3E,5E)-6,10-dimethylundeca-3,5,9-trien-2-one. It carries out the reaction 13-cis-lycopene + O2 = 13-cis-10'-apo-lycopenal + (3E,5E)-6,10-dimethylundeca-3,5,9-trien-2-one. The catalysed reaction is lutein + O2 = (3R,6R)-hydroxy-alpha-ionone + (3R)-3-hydroxy-10'-apo-beta-carotenal. The enzyme catalyses lutein + O2 = (3R,6R)-3-hydroxy-10'-apo-alpha-carotenal + (3R)-hydroxy-beta-ionone. It catalyses the reaction all-trans-zeaxanthin + 2 O2 = 4,9-dimethyldodeca-2,4,6,8,10-pentaenedial + 2 (3R)-hydroxy-beta-ionone. It carries out the reaction all-trans-zeaxanthin + O2 = (3R)-3-hydroxy-10'-apo-beta-carotenal + (3R)-hydroxy-beta-ionone. The catalysed reaction is beta-cryptoxanthin + O2 = all-trans-10'-apo-beta-carotenal + (3R)-hydroxy-beta-ionone. The enzyme catalyses all-trans-10'-apo-beta-carotenal + O2 = beta-ionone + 4,9-dimethyldodeca-2,4,6,8,10-pentaenedial. It catalyses the reaction (3R)-3-hydroxy-10'-apo-beta-carotenal + O2 = 4,9-dimethyldodeca-2,4,6,8,10-pentaenedial + (3R)-hydroxy-beta-ionone. It carries out the reaction (3R,6R)-3-hydroxy-10'-apo-alpha-carotenal + O2 = (3R,6R)-hydroxy-alpha-ionone + 4,9-dimethyldodeca-2,4,6,8,10-pentaenedial. In terms of biological role, broad specificity mitochondrial dioxygenase that mediates the asymmetric oxidative cleavage of carotenoids. Cleaves carotenes (pure hydrocarbon carotenoids) such as all-trans-beta-carotene and lycopene as well as xanthophylls (oxygenated carotenoids) such as zeaxanthin, lutein and beta-cryptoxanthin at both the 9,10 and the 9',10' carbon-carbon double bond. Through its function in carotenoids metabolism regulates oxidative stress and the production of important signaling molecules. This is Carotenoid-cleaving dioxygenase, mitochondrial from Macaca fascicularis (Crab-eating macaque).